The primary structure comprises 341 residues: Anthranilate phosphoribosyltransferase (341 aa).

5-phospho-alpha-D-ribose 1-diphosphate contacts are provided by residues Gly-82, 85–86 (GD), Thr-90, 92–95 (NIST), 110–118 (KHGGRSVSG), and Ser-122. Anthranilate is bound at residue Gly-82. Ser-94 provides a ligand contact to Mg(2+). Residue Arg-168 participates in anthranilate binding. Asp-227 and Glu-228 together coordinate Mg(2+).

The protein belongs to the anthranilate phosphoribosyltransferase family. In terms of assembly, homodimer. Mg(2+) is required as a cofactor.

The enzyme catalyses N-(5-phospho-beta-D-ribosyl)anthranilate + diphosphate = 5-phospho-alpha-D-ribose 1-diphosphate + anthranilate. It functions in the pathway amino-acid biosynthesis; L-tryptophan biosynthesis; L-tryptophan from chorismate: step 2/5. Catalyzes the transfer of the phosphoribosyl group of 5-phosphorylribose-1-pyrophosphate (PRPP) to anthranilate to yield N-(5'-phosphoribosyl)-anthranilate (PRA). This is Anthranilate phosphoribosyltransferase from Nitrosomonas europaea (strain ATCC 19718 / CIP 103999 / KCTC 2705 / NBRC 14298).